A 113-amino-acid polypeptide reads, in one-letter code: U11-theraphotoxin-Hhn1a (113 aa).

The N-terminal stretch at 1–21 is a signal peptide; that stretch reads MNTVRVTFLLVFVLPVSLGQA. The propeptide occupies 22 to 74; the sequence is DKDENRMEMQEKTEQGKSYLDFAENLLLQKLEELEAKLLEEDSEESRNSRQKR. Basic and acidic residues predominate over residues 60–69; the sequence is LEEDSEESRN. Positions 60 to 83 are disordered; it reads LEEDSEESRNSRQKRCIGEGVPCD. Disulfide bonds link cysteine 75–cysteine 90, cysteine 82–cysteine 95, and cysteine 89–cysteine 110.

Belongs to the neurotoxin 14 (magi-1) family. 01 (HNTX-16) subfamily. Expressed by the venom gland.

It is found in the secreted. Functionally, probable ion channel inhibitor. The protein is U11-theraphotoxin-Hhn1a of Cyriopagopus hainanus (Chinese bird spider).